Consider the following 241-residue polypeptide: Cobalt transport protein CbiM (241 aa).

An N-terminal signal peptide occupies residues 1-24 (MKKIKIISFSVAYLILLTPIYASA). The next 6 membrane-spanning stretches (helical) occupy residues 30 to 50 (GFLP…FIVG), 67 to 87 (LLLG…LPSV), 99 to 119 (LGTI…VLIF), 131 to 151 (TLGA…YFIF), 160 to 180 (SLAV…VTSL), and 202 to 222 (GIFA…TLIV).

Belongs to the CbiM family. Forms an energy-coupling factor (ECF) transporter complex composed of an ATP-binding protein (A component, CbiO), a transmembrane protein (T component, CbiQ) and 2 possible substrate-capture proteins (S components, CbiM and CbiN) of unknown stoichimetry.

The protein localises to the cell membrane. Its pathway is cofactor biosynthesis; adenosylcobalamin biosynthesis. Part of the energy-coupling factor (ECF) transporter complex CbiMNOQ involved in cobalt import. This chain is Cobalt transport protein CbiM, found in Acetoanaerobium sticklandii (strain ATCC 12662 / DSM 519 / JCM 1433 / CCUG 9281 / NCIMB 10654 / HF) (Clostridium sticklandii).